Here is a 281-residue protein sequence, read N- to C-terminus: Very long chain fatty acid elongase 7 (281 aa).

The residue at position 2 (Ala2) is an N-acetylalanine. Topologically, residues 2 to 27 (AFSDLTSRTVHLYDNWIKDADPRVED) are lumenal. The helical transmembrane segment at 28 to 48 (WLLMSSPLPQTILLGFYVYFV) threads the bilayer. Over 49–72 (TSLGPKLMENRKPFELKKAMITYN) the chain is Cytoplasmic. The chain crosses the membrane as a helical span at residues 73–93 (FFIVLFSVYMCYEFVMSGWGI). The Lumenal portion of the chain corresponds to 94–115 (GYSFRCDIVDYSRSPTALRMAR). Cys99 and Cys231 are oxidised to a cystine. A helical membrane pass occupies residues 116–136 (TCWLYYFSKFIELLDTIFFVL). 3-oxoeicosanoyl-CoA is bound by residues Lys124, Arg137, Lys139, Gln142, and His147. Over 137–142 (RKKNSQ) the chain is Cytoplasmic. The chain crosses the membrane as a helical span at residues 143-162 (VTFLHVFHHTIMPWTWWFGV). The short motif at 147-151 (HVFHH) is the HxxHH motif element. His150 functions as the Nucleophile in the catalytic mechanism. At 163 to 171 (KFAAGGLGT) the chain is on the lumenal side. A helical membrane pass occupies residues 172–194 (FHALLNTAVHVVMYSYYGLSALG). Residues Tyr187, Lys204, Thr208, and Gln211 each contribute to the 3-oxoeicosanoyl-CoA site. The Cytoplasmic portion of the chain corresponds to 195–206 (PAYQKYLWWKKY). Residues 207-227 (LTSLQLVQFVIVAIHISQFFF) form a helical membrane-spanning segment. The Lumenal portion of the chain corresponds to 228-236 (MEDCKYQFP). The helical transmembrane segment at 237 to 257 (VFACIIMSYSFMFLLLFLHFW) threads the bilayer. At 258–281 (YRAYTKGQRLPKTVKNGTCKNKDN) the chain is on the cytoplasmic side. Arg266 contributes to the 3-oxoeicosanoyl-CoA binding site. Residues 277 to 281 (KNKDN) carry the Di-lysine motif motif.

The protein belongs to the ELO family. ELOVL7 subfamily. As to quaternary structure, homodimer. Interacts with TECR. In terms of tissue distribution, expressed in most tissues except heart and skeletal muscle.

It is found in the endoplasmic reticulum membrane. It catalyses the reaction a very-long-chain acyl-CoA + malonyl-CoA + H(+) = a very-long-chain 3-oxoacyl-CoA + CO2 + CoA. The enzyme catalyses eicosanoyl-CoA + malonyl-CoA + H(+) = 3-oxodocosanoyl-CoA + CO2 + CoA. The catalysed reaction is (5Z,8Z,11Z,14Z)-eicosatetraenoyl-CoA + malonyl-CoA + H(+) = (7Z,10Z,13Z,16Z)-3-oxodocosatetraenoyl-CoA + CO2 + CoA. It carries out the reaction (6Z,9Z,12Z)-octadecatrienoyl-CoA + malonyl-CoA + H(+) = (8Z,11Z,14Z)-3-oxoeicosatrienoyl-CoA + CO2 + CoA. It catalyses the reaction (9Z,12Z)-octadecadienoyl-CoA + malonyl-CoA + H(+) = (11Z,14Z)-3-oxoicosa-11,14-dienoyl-CoA + CO2 + CoA. The enzyme catalyses (9Z)-octadecenoyl-CoA + malonyl-CoA + H(+) = 3-oxo-(11Z)-eicosenoyl-CoA + CO2 + CoA. The catalysed reaction is octadecanoyl-CoA + malonyl-CoA + H(+) = 3-oxoeicosanoyl-CoA + CO2 + CoA. It carries out the reaction hexadecanoyl-CoA + malonyl-CoA + H(+) = 3-oxooctadecanoyl-CoA + CO2 + CoA. It catalyses the reaction (9Z,12Z,15Z)-octadecatrienoyl-CoA + malonyl-CoA + H(+) = (11Z,14Z,17Z)-3-oxoeicosatrienoyl-CoA + CO2 + CoA. It functions in the pathway lipid metabolism; fatty acid biosynthesis. In terms of biological role, catalyzes the first and rate-limiting reaction of the four reactions that constitute the long-chain fatty acids elongation cycle. This endoplasmic reticulum-bound enzymatic process allows the addition of 2 carbons to the chain of long- and very long-chain fatty acids (VLCFAs) per cycle. Condensing enzyme with higher activity toward C18 acyl-CoAs, especially C18:3(n-3) acyl-CoAs and C18:3(n-6)-CoAs. Also active toward C20:4-, C18:0-, C18:1-, C18:2- and C16:0-CoAs, and weakly toward C20:0-CoA. Little or no activity toward C22:0-, C24:0-, or C26:0-CoAs. May participate in the production of saturated and polyunsaturated VLCFAs of different chain lengths that are involved in multiple biological processes as precursors of membrane lipids and lipid mediators. The protein is Very long chain fatty acid elongase 7 of Homo sapiens (Human).